The following is a 458-amino-acid chain: Light-independent protochlorophyllide reductase subunit N (458 aa).

Residues Cys-20, Cys-45, and Cys-105 each contribute to the [4Fe-4S] cluster site.

The protein belongs to the BchN/ChlN family. Protochlorophyllide reductase is composed of three subunits; ChlL, ChlN and ChlB. Forms a heterotetramer of two ChlB and two ChlN subunits. [4Fe-4S] cluster is required as a cofactor.

The protein localises to the plastid. The protein resides in the chloroplast. The enzyme catalyses chlorophyllide a + oxidized 2[4Fe-4S]-[ferredoxin] + 2 ADP + 2 phosphate = protochlorophyllide a + reduced 2[4Fe-4S]-[ferredoxin] + 2 ATP + 2 H2O. It participates in porphyrin-containing compound metabolism; chlorophyll biosynthesis (light-independent). Its function is as follows. Component of the dark-operative protochlorophyllide reductase (DPOR) that uses Mg-ATP and reduced ferredoxin to reduce ring D of protochlorophyllide (Pchlide) to form chlorophyllide a (Chlide). This reaction is light-independent. The NB-protein (ChlN-ChlB) is the catalytic component of the complex. In Angiopteris evecta (Mule's foot fern), this protein is Light-independent protochlorophyllide reductase subunit N.